We begin with the raw amino-acid sequence, 221 residues long: Adenylate kinase (221 aa).

Residue 10-15 (GAGKGT) coordinates ATP. The segment at 30–59 (STGDIFRQNLRDNTELGKLAKEYMDKGLLV) is NMP. Residues threonine 31, arginine 36, 57–59 (LLV), 85–88 (GYPR), and glutamine 92 contribute to the AMP site. The interval 126-163 (GRRVCPVCGATYHIKTSPPKVDNVCDKCGSELIQRSDD) is LID. ATP is bound at residue arginine 127. Residues cysteine 130 and cysteine 133 each coordinate Zn(2+). Residue 136-137 (TY) coordinates ATP. 2 residues coordinate Zn(2+): cysteine 150 and cysteine 153. AMP is bound by residues arginine 160 and arginine 171. Lysine 199 is an ATP binding site.

Belongs to the adenylate kinase family. Monomer.

It localises to the cytoplasm. The enzyme catalyses AMP + ATP = 2 ADP. It functions in the pathway purine metabolism; AMP biosynthesis via salvage pathway; AMP from ADP: step 1/1. In terms of biological role, catalyzes the reversible transfer of the terminal phosphate group between ATP and AMP. Plays an important role in cellular energy homeostasis and in adenine nucleotide metabolism. This is Adenylate kinase from Caldanaerobacter subterraneus subsp. tengcongensis (strain DSM 15242 / JCM 11007 / NBRC 100824 / MB4) (Thermoanaerobacter tengcongensis).